We begin with the raw amino-acid sequence, 228 residues long: Ribonuclease 3 (228 aa).

The RNase III domain maps to 5–134 (RSKLEKDYGI…FLGALLLDKG (130 aa)). E47 contributes to the Mg(2+) binding site. The active site involves D51. Positions 120 and 123 each coordinate Mg(2+). The active site involves E123. The 69-residue stretch at 160–228 (DYKTSLQELL…AAKNALATLQ (69 aa)) folds into the DRBM domain.

This sequence belongs to the ribonuclease III family. Homodimer. Mg(2+) is required as a cofactor.

The protein resides in the cytoplasm. The catalysed reaction is Endonucleolytic cleavage to 5'-phosphomonoester.. Digests double-stranded RNA. Involved in the processing of primary rRNA transcript to yield the immediate precursors to the large and small rRNAs (23S and 16S). Processes some mRNAs, and tRNAs when they are encoded in the rRNA operon. Processes pre-crRNA and tracrRNA of type II CRISPR loci if present in the organism. This Streptococcus agalactiae serotype III (strain NEM316) protein is Ribonuclease 3.